Consider the following 352-residue polypeptide: Serine/threonine-protein phosphatase 2A activator 2 (352 aa).

It belongs to the PTPA-type PPIase family.

The protein localises to the cytoplasm. The enzyme catalyses [protein]-peptidylproline (omega=180) = [protein]-peptidylproline (omega=0). Functionally, PPIases accelerate the folding of proteins. It catalyzes the cis-trans isomerization of proline imidic peptide bonds in oligopeptides. Acts as a regulatory subunit for PP2A-like phosphatases modulating their activity or substrate specificity, probably by inducing a conformational change in the catalytic subunit, a direct target of the PPIase. Can reactivate inactive phosphatase PP2A-phosphatase methylesterase complexes (PP2Ai) in presence of ATP and Mg(2+) by dissociating the inactive form from the complex. The polypeptide is Serine/threonine-protein phosphatase 2A activator 2 (rrd2) (Schizosaccharomyces pombe (strain 972 / ATCC 24843) (Fission yeast)).